The primary structure comprises 541 residues: Protein yellow (541 aa).

The first 21 residues, 1–21 (MFQDKGWILVTLITLVTPSWA), serve as a signal peptide directing secretion. 2 N-linked (GlcNAc...) asparagine glycosylation sites follow: Asn-144 and Asn-215. A disordered region spans residues 443–463 (QKPQTSWASSPPPPSRTYLPA).

The protein belongs to the major royal jelly protein family.

The protein resides in the secreted. Controls the pigmentation pattern of the adult cuticle and larval mouth parts. This chain is Protein yellow (y), found in Drosophila melanogaster (Fruit fly).